The following is a 178-amino-acid chain: Thymidine kinase (178 aa).

13-20 (GPMFAGKS) contributes to the ATP binding site. Residue glutamate 85 is the Proton acceptor of the active site. Position 115 (phenylalanine 115) interacts with substrate. Positions 140 and 143 each coordinate Zn(2+). 159–163 (IEVIG) serves as a coordination point for substrate. Zn(2+) contacts are provided by cysteine 172 and cysteine 175.

It belongs to the thymidine kinase family.

The enzyme catalyses thymidine + ATP = dTMP + ADP + H(+). In Oryctolagus cuniculus (Rabbit), this protein is Thymidine kinase (TK).